The chain runs to 369 residues: Anhydro-N-acetylmuramic acid kinase (369 aa).

12–19 serves as a coordination point for ATP; it reads GTSMDGVD.

Belongs to the anhydro-N-acetylmuramic acid kinase family.

It carries out the reaction 1,6-anhydro-N-acetyl-beta-muramate + ATP + H2O = N-acetyl-D-muramate 6-phosphate + ADP + H(+). Its pathway is amino-sugar metabolism; 1,6-anhydro-N-acetylmuramate degradation. The protein operates within cell wall biogenesis; peptidoglycan recycling. Functionally, catalyzes the specific phosphorylation of 1,6-anhydro-N-acetylmuramic acid (anhMurNAc) with the simultaneous cleavage of the 1,6-anhydro ring, generating MurNAc-6-P. Is required for the utilization of anhMurNAc either imported from the medium or derived from its own cell wall murein, and thus plays a role in cell wall recycling. The sequence is that of Anhydro-N-acetylmuramic acid kinase from Shewanella putrefaciens (strain CN-32 / ATCC BAA-453).